The sequence spans 147 residues: Proteinase inhibitor type-2 T (147 aa).

The first 25 residues, 1 to 25 (MAVHKEVSFVAYLLIVLGMFLYVDA), serve as a signal peptide directing secretion. Repeat copies occupy residues 25 to 82 (ALGC…PKNP) and 83 to 142 (KACP…EPKP). Intrachain disulfides connect Cys-28/Cys-116, Cys-32/Cys-112, Cys-40/Cys-122, Cys-52/Cys-89, Cys-55/Cys-73, Cys-56/Cys-85, Cys-62/Cys-98, and Cys-115/Cys-133.

Belongs to the protease inhibitor I20 (potato type II proteinase inhibitor) family.

Functionally, inhibitor of trypsin and chymotrypsin. The chain is Proteinase inhibitor type-2 T (PIN2T) from Solanum tuberosum (Potato).